The following is a 370-amino-acid chain: Putative agmatine deiminase (370 aa).

Cys361 serves as the catalytic Amidino-cysteine intermediate.

The protein belongs to the agmatine deiminase family.

The catalysed reaction is agmatine + H2O = N-carbamoylputrescine + NH4(+). In Shewanella putrefaciens (strain CN-32 / ATCC BAA-453), this protein is Putative agmatine deiminase.